The primary structure comprises 463 residues: Regulator of microtubule dynamics protein 3 (463 aa).

At 1–4 (MSKL) the chain is on the mitochondrial intermembrane side. The helical transmembrane segment at 5 to 27 (ILSYRIGLGLVVGAAAGAVIYIV) threads the bilayer. Residues 28–463 (FRRNRKKTRK…PATAEEELLV (436 aa)) are Cytoplasmic-facing. The short motif at 146-161 (IYFTATSGAAHTDAES) is the FFAT element. The tract at residues 153–192 (GAAHTDAESEGGYSTAYAESDFERESSRASEAEEEDEVSC) is disordered. Basic and acidic residues predominate over residues 173 to 183 (DFERESSRASE). Positions 279–302 (AEDAQEKKSFASEGKEEAEAALQK) form a coiled coil.

Belongs to the RMDN family. As to quaternary structure, interacts with PTPN2. Interacts with microtubules. Interacts with VAPB. Interacts (FFAT motif) with MOSPD2 (via MSP domain).

The protein localises to the mitochondrion outer membrane. Its subcellular location is the cytoplasm. The protein resides in the nucleus. It is found in the cytoskeleton. It localises to the spindle. The protein localises to the spindle pole. Functionally, involved in cellular calcium homeostasis regulation. The sequence is that of Regulator of microtubule dynamics protein 3 (rmdn3) from Xenopus laevis (African clawed frog).